A 145-amino-acid polypeptide reads, in one-letter code: Large ribosomal subunit protein uL15 (145 aa).

The tract at residues 1–58 is disordered; that stretch reads MFSLLKPKGAAKRRKIVGRGPGSGLGKTSGRGQKGQKARNTSPRLGFEGGQTPLYRRL. Gly residues predominate over residues 19–33; it reads RGPGSGLGKTSGRGQ.

This sequence belongs to the universal ribosomal protein uL15 family. Part of the 50S ribosomal subunit.

Binds to the 23S rRNA. This is Large ribosomal subunit protein uL15 from Borreliella afzelii (strain PKo) (Borrelia afzelii).